Here is a 610-residue protein sequence, read N- to C-terminus: Anthocyanin regulatory Lc protein (610 aa).

Disordered regions lie at residues 402 to 422 (ATGA…MSER) and 468 to 524 (LESS…PVLT). A bHLH domain is found at 412–461 (TGTKNHVMSERKRREKLNEMFLVLKSLLPSIHRVNKASILAETIAYLKEL). Over residues 481–495 (TTTRLITRPSRGNNE) the composition is skewed to polar residues. Over residues 508–519 (KSPELGRDDVER) the composition is skewed to basic and acidic residues.

This sequence belongs to the bHLH protein family. As to quaternary structure, efficient DNA binding requires dimerization with another bHLH protein.

The protein resides in the nucleus. In terms of biological role, putative transcriptional activator. Controls tissue-specific synthesis of anthocyanin pigments in various parts of the maize plant. The protein is Anthocyanin regulatory Lc protein (LC) of Zea mays (Maize).